Here is a 360-residue protein sequence, read N- to C-terminus: Phospho-N-acetylmuramoyl-pentapeptide-transferase (360 aa).

10 helical membrane-spanning segments follow: residues 26–46, 73–93, 97–117, 135–155, 168–188, 199–219, 236–256, 263–283, 288–308, and 338–358; these read AILGLLTALVFSLWWGPILIK, TMGGILILAGIFISVLLWGDL, YVLVTLFVLASFGVIGFIDDY, ALQSIAALVVAVYLYSSSTMV, IMPQLGFMFILLAYFTIVGAS, GLAIMPTVMVAAAFALIAYLS, AGELVIVCTAMVGAGLGFLWF, VFMGDVGSLALGAALGVIAIL, ILLVIMGGVFVMETVSVILQV, and VIVRFWIISLFLVLLGLATLK.

This sequence belongs to the glycosyltransferase 4 family. MraY subfamily. Requires Mg(2+) as cofactor.

Its subcellular location is the cell inner membrane. It carries out the reaction UDP-N-acetyl-alpha-D-muramoyl-L-alanyl-gamma-D-glutamyl-meso-2,6-diaminopimeloyl-D-alanyl-D-alanine + di-trans,octa-cis-undecaprenyl phosphate = di-trans,octa-cis-undecaprenyl diphospho-N-acetyl-alpha-D-muramoyl-L-alanyl-D-glutamyl-meso-2,6-diaminopimeloyl-D-alanyl-D-alanine + UMP. It functions in the pathway cell wall biogenesis; peptidoglycan biosynthesis. In terms of biological role, catalyzes the initial step of the lipid cycle reactions in the biosynthesis of the cell wall peptidoglycan: transfers peptidoglycan precursor phospho-MurNAc-pentapeptide from UDP-MurNAc-pentapeptide onto the lipid carrier undecaprenyl phosphate, yielding undecaprenyl-pyrophosphoryl-MurNAc-pentapeptide, known as lipid I. The protein is Phospho-N-acetylmuramoyl-pentapeptide-transferase of Shewanella frigidimarina (strain NCIMB 400).